The sequence spans 108 residues: Curli assembly protein CsgC (108 aa).

A signal peptide spans M1 to A8.

The protein belongs to the CsgC/AgfC family.

The protein resides in the periplasm. Its function is as follows. Plays a role in the extracellular assembly of CsgA into thin aggregative fimbriae (Tafi) fibers. Assembly may also require CsgE. Tafi are thought to be assembled via an extracellular nucleation-precipitation (ENP) pathway, and possibly also via an intracellular non-CsgC-dependent pathway. The protein is Curli assembly protein CsgC of Salmonella arizonae (strain ATCC BAA-731 / CDC346-86 / RSK2980).